We begin with the raw amino-acid sequence, 199 residues long: NAD(P)H dehydrogenase (quinone) (199 aa).

Residues 4 to 190 (VLVLYYSAYG…AGARYQGRVI (187 aa)) form the Flavodoxin-like domain. FMN is bound by residues 10–15 (SAYGHI) and 78–80 (TRF). Position 12 (Tyr-12) interacts with NAD(+). A substrate-binding site is contributed by Trp-98. FMN is bound by residues 113–119 (STATQHG) and His-134.

This sequence belongs to the WrbA family. FMN is required as a cofactor.

The enzyme catalyses a quinone + NADH + H(+) = a quinol + NAD(+). The catalysed reaction is a quinone + NADPH + H(+) = a quinol + NADP(+). In Bradyrhizobium sp. (strain BTAi1 / ATCC BAA-1182), this protein is NAD(P)H dehydrogenase (quinone).